The following is a 168-amino-acid chain: Ribosome maturation factor RimM (168 aa).

In terms of domain architecture, PRC barrel spans 94–167; sequence DGQYYYHQII…FVTVELMEGL (74 aa).

This sequence belongs to the RimM family. Binds ribosomal protein uS19.

It localises to the cytoplasm. Its function is as follows. An accessory protein needed during the final step in the assembly of 30S ribosomal subunit, possibly for assembly of the head region. Essential for efficient processing of 16S rRNA. May be needed both before and after RbfA during the maturation of 16S rRNA. It has affinity for free ribosomal 30S subunits but not for 70S ribosomes. The protein is Ribosome maturation factor RimM of Limosilactobacillus reuteri (strain DSM 20016) (Lactobacillus reuteri).